The sequence spans 346 residues: Uracil-DNA glycosylase (346 aa).

The interval 1–105 (MSGKITDFFE…KLKNEEKSEE (105 aa)) is disordered. Positions 20 to 29 (AENKDNDKEL) are enriched in basic and acidic residues. The segment covering 30 to 42 (TSTTTTTTTTSTT) has biased composition (low complexity). The segment covering 43–64 (SKKKVAAAPKKKAAVASKKRKH) has biased composition (basic residues). The span at 67–86 (SDEETDKEEQQNDDDDDGEE) shows a compositional bias: acidic residues. Asp-186 serves as the catalytic Proton acceptor.

The protein belongs to the uracil-DNA glycosylase (UDG) superfamily. UNG family.

The protein resides in the mitochondrion. The protein localises to the nucleus. It catalyses the reaction Hydrolyzes single-stranded DNA or mismatched double-stranded DNA and polynucleotides, releasing free uracil.. Its function is as follows. Excises uracil residues from the DNA which can arise as a result of misincorporation of dUMP residues by DNA polymerase or due to deamination of cytosine. The protein is Uracil-DNA glycosylase (uglA) of Dictyostelium discoideum (Social amoeba).